The chain runs to 316 residues: Annexin D5 (316 aa).

Ala-2 carries the N-acetylalanine modification. 4 Annexin repeats span residues 11 to 82, 83 to 154, 166 to 238, and 242 to 313; these read PSPR…LWMP, EAVE…AYLN, ASVE…TILQ, and NSCF…SLLG. Ca(2+) contacts are provided by Phe-24, Gly-26, Gly-28, and Glu-68. Phosphoserine is present on Ser-95. Thr-112 is modified (phosphothreonine). Ca(2+) is bound at residue Gly-259. Position 284 is a phosphotyrosine (Tyr-284). Ca(2+) is bound by residues Asp-299 and Thr-300.

This sequence belongs to the annexin (TC 1.A.31.1) family. Expressed mainly in roots and flowers. Lower in stems and leaves.

The polypeptide is Annexin D5 (ANN5) (Arabidopsis thaliana (Mouse-ear cress)).